Here is a 203-residue protein sequence, read N- to C-terminus: Small ribosomal subunit protein uS7B (203 aa).

Belongs to the universal ribosomal protein uS7 family. Component of the small ribosomal subunit (SSU). Mature yeast ribosomes consist of a small (40S) and a large (60S) subunit. The 40S small subunit contains 1 molecule of ribosomal RNA (18S rRNA) and at least 33 different proteins. The large 60S subunit contains 3 rRNA molecules (25S, 5.8S and 5S rRNA) and at least 46 different proteins.

The protein resides in the cytoplasm. In terms of biological role, component of the ribosome, a large ribonucleoprotein complex responsible for the synthesis of proteins in the cell. The small ribosomal subunit (SSU) binds messenger RNAs (mRNAs) and translates the encoded message by selecting cognate aminoacyl-transfer RNA (tRNA) molecules. The large subunit (LSU) contains the ribosomal catalytic site termed the peptidyl transferase center (PTC), which catalyzes the formation of peptide bonds, thereby polymerizing the amino acids delivered by tRNAs into a polypeptide chain. The nascent polypeptides leave the ribosome through a tunnel in the LSU and interact with protein factors that function in enzymatic processing, targeting, and the membrane insertion of nascent chains at the exit of the ribosomal tunnel. This is Small ribosomal subunit protein uS7B (rps502) from Schizosaccharomyces pombe (strain 972 / ATCC 24843) (Fission yeast).